The primary structure comprises 119 residues: Probable non-functional T cell receptor gamma variable 10 (119 aa).

The first 19 residues, 1–19 (MSLLEAFAFSSWALGLGLS), serve as a signal peptide directing secretion. Residues 24 to 119 (FQLSISTEVK…MAVYYCAAWD (96 aa)) enclose the Ig-like domain. Cys-40 and Cys-115 are joined by a disulfide.

In terms of assembly, gamma-delta TR is a heterodimer composed of a gamma and delta chain; disulfide-linked. The gamma-delta TR is associated with the transmembrane signaling CD3 coreceptor proteins following the stoichiometry: a single gamma-delta TR heterodimer associates with one CD3D-CD3E heterodimer, one CD3G-CD3E heterodimer and one CD247 homodimer forming a stable octameric structure. Upon activation, gamma-delta TR complex associates with FCER1G to initiate intracellular signaling.

The protein localises to the cell membrane. In terms of biological role, probable non-functional open reading frame (ORF) of V region of the variable domain of T cell receptor (TR) gamma chain. Non-functional ORF generally cannot participate in the synthesis of a productive T cell receptor (TR) chain due to altered V-(D)-J or switch recombination and/or splicing site (at mRNA level) and/or conserved amino acid change (protein level). Gamma-delta TRs recognize a variety of self and foreign non-peptide antigens frequently expressed at the epithelial boundaries between the host and external environment, including endogenous lipids presented by MH-like protein CD1D and phosphoantigens presented by butyrophilin-like molecule BTN3A1. Upon antigen recognition induces rapid, innate-like immune responses involved in pathogen clearance and tissue repair. Binding of gamma-delta TR complex to antigen triggers phosphorylation of immunoreceptor tyrosine-based activation motifs (ITAMs) in the CD3 chains by the LCK and FYN kinases, allowing the recruitment, phosphorylation, and activation of ZAP70 that facilitates phosphorylation of the scaffolding proteins LCP2 and LAT. This lead to the formation of a supramolecular signalosome that recruits the phospholipase PLCG1, resulting in calcium mobilization and ERK activation, ultimately leading to T cell expansion and differentiation into effector cells. Gamma-delta TRs are produced through somatic rearrangement of a limited repertoire of variable (V), diversity (D), and joining (J) genes. The potential diversity of gamma-delta TRs is conferred by the unique ability to rearrange (D) genes in tandem and to utilize all three reading frames. The combinatorial diversity is considerably increased by the sequence exonuclease trimming and random nucleotide (N) region additions which occur during the V-(D)-J rearrangements. This Homo sapiens (Human) protein is Probable non-functional T cell receptor gamma variable 10.